A 177-amino-acid chain; its full sequence is Interleukin-19 (177 aa).

The first 24 residues, 1–24, serve as a signal peptide directing secretion; it reads MKLQCVSLWLLGTILILCSVDNHG. 3 cysteine pairs are disulfide-bonded: Cys-28/Cys-121, Cys-75/Cys-127, and Cys-76/Cys-129. Asn-56 carries N-linked (GlcNAc...) asparagine glycosylation. Asn-135 carries N-linked (GlcNAc...) asparagine glycosylation.

It belongs to the IL-10 family.

It localises to the secreted. Its function is as follows. Cytokine that functions as an anti-inflammatory and proangiogenic factor. Polarizes adaptive immunity to an anti-inflammatory phenotype through induction of T-helper 2 responses by both down-regulation of IFN-gamma and up-regulation of IL4 and IL13. Produced by osteocytes, stimulates granulopoiesis and neutrophil formation. Exerts its biological effect through a receptor complex consisting of a heterodimer of IL20RA and IL20RB. In turn, activates the Janus kinase (JAK) and signal transducer and activator of transcription (STAT) pathway, and importantly, STAT3. The sequence is that of Interleukin-19 (IL19) from Homo sapiens (Human).